Consider the following 329-residue polypeptide: Formimidoylglutamase (329 aa).

Mn(2+)-binding residues include histidine 133, aspartate 159, histidine 161, aspartate 163, aspartate 253, and aspartate 255.

The protein belongs to the arginase family. It depends on Mn(2+) as a cofactor.

It catalyses the reaction N-formimidoyl-L-glutamate + H2O = formamide + L-glutamate. It functions in the pathway amino-acid degradation; L-histidine degradation into L-glutamate; L-glutamate from N-formimidoyl-L-glutamate (hydrolase route): step 1/1. In terms of biological role, catalyzes the conversion of N-formimidoyl-L-glutamate to L-glutamate and formamide. The polypeptide is Formimidoylglutamase (Streptococcus gordonii (strain Challis / ATCC 35105 / BCRC 15272 / CH1 / DL1 / V288)).